Consider the following 271-residue polypeptide: Zinc finger CCHC domain-containing protein 9 (271 aa).

Residues 1-67 (MTRWARVTTS…RKKNKKKKEY (67 aa)) form a disordered region. Residues 7-20 (VTTSNSKRPLSATS) show a composition bias toward polar residues. Residues 22–33 (EDMKKGSVERAD) show a composition bias toward basic and acidic residues. The segment covering 35-46 (SLPNRKQCQSSR) has biased composition (polar residues). The segment covering 56–65 (AKRKKNKKKK) has biased composition (basic residues). 4 consecutive CCHC-type zinc fingers follow at residues 128-145 (MVCF…DCPA), 155-172 (GICY…KCRA), 184-201 (AKCF…SCPD), and 211-228 (GSCK…DCRE).

Detected in brain cortex and in testis.

It is found in the nucleus. The protein resides in the nucleolus. Its function is as follows. May down-regulate transcription mediated by NF-kappa-B and the serum response element. The polypeptide is Zinc finger CCHC domain-containing protein 9 (Zcchc9) (Mus musculus (Mouse)).